The chain runs to 141 residues: MERYQELTVLLLLLLLEGGSGGAGSFRPLCRPTNATLAAESDACPVCVTFTTTICAGYCPSMVRVLPAALPPGPQLVCTYRELTFSWIRLPGCPPGVDPIFSFPVALSCACGSCRLSHSDCGGPRARPHLCTRPHLSLRLL.

Residues 1-21 (MERYQELTVLLLLLLLEGGSG) form the signal peptide. 6 cysteine pairs are disulfide-bonded: Cys30/Cys78, Cys44/Cys93, Cys47/Cys131, Cys55/Cys109, Cys59/Cys111, and Cys114/Cys121. An N-linked (GlcNAc...) asparagine glycan is attached at Asn34.

Belongs to the glycoprotein hormones subunit beta family. As to quaternary structure, heterodimer of a common alpha chain and a unique beta chain which confers biological specificity to thyrotropin, lutropin, follitropin and gonadotropin.

It is found in the secreted. Functionally, promotes spermatogenesis and ovulation by stimulating the testes and ovaries to synthesize steroids. The sequence is that of Lutropin subunit beta (LHB) from Monodelphis domestica (Gray short-tailed opossum).